Consider the following 258-residue polypeptide: Isoprenyl transferase (258 aa).

Asp38 is a catalytic residue. Residue Asp38 participates in Mg(2+) binding. Substrate contacts are provided by residues 39 to 42 (GNGR), Trp43, Arg51, His55, and 83 to 85 (STE). The active-site Proton acceptor is Asn86. Substrate contacts are provided by residues Trp87, Arg89, Arg206, and 212 to 214 (RIS). Glu225 is a Mg(2+) binding site.

The protein belongs to the UPP synthase family. Homodimer. The cofactor is Mg(2+).

Its function is as follows. Catalyzes the condensation of isopentenyl diphosphate (IPP) with allylic pyrophosphates generating different type of terpenoids. This chain is Isoprenyl transferase, found in Bacillus cereus (strain ATCC 10987 / NRS 248).